The following is a 272-amino-acid chain: MDTLAFINRALVEEGYSLKDIKLVLITDFEPSSVEAIRRLLAVNQGVSFIGRKYVKEVLEKFGLRNVRFRAVEEIPSLEFKLPESGTVKVLPFRNSPQEASAGYLLEEERILFSGKFLGSFGEKGDTIQIFHRVFFPCRNILDYNVGLLESIGEEFEVFPFYGEKQKLSAKTLKEYFNYTVKGSVLEREVILGLVNGVLLNLSDEERENLLSSIGYLAEVDDKVIVDFYTEPNLFYEEFVNTLPDAVKSKEEFYRIVEKLLEHNFYVPLRAV.

The region spanning 1-27 is the HTH merR-type domain; sequence MDTLAFINRALVEEGYSLKDIKLVLIT.

This is an uncharacterized protein from Aquifex aeolicus (strain VF5).